The following is a 172-amino-acid chain: NAD(P)H-quinone oxidoreductase subunit J (172 aa).

The protein belongs to the complex I 30 kDa subunit family. NDH-1 can be composed of about 15 different subunits; different subcomplexes with different compositions have been identified which probably have different functions.

The protein resides in the cellular thylakoid membrane. The catalysed reaction is a plastoquinone + NADH + (n+1) H(+)(in) = a plastoquinol + NAD(+) + n H(+)(out). It carries out the reaction a plastoquinone + NADPH + (n+1) H(+)(in) = a plastoquinol + NADP(+) + n H(+)(out). Its function is as follows. NDH-1 shuttles electrons from an unknown electron donor, via FMN and iron-sulfur (Fe-S) centers, to quinones in the respiratory and/or the photosynthetic chain. The immediate electron acceptor for the enzyme in this species is believed to be plastoquinone. Couples the redox reaction to proton translocation, and thus conserves the redox energy in a proton gradient. Cyanobacterial NDH-1 also plays a role in inorganic carbon-concentration. The protein is NAD(P)H-quinone oxidoreductase subunit J of Synechococcus sp. (strain ATCC 27144 / PCC 6301 / SAUG 1402/1) (Anacystis nidulans).